Here is a 217-residue protein sequence, read N- to C-terminus: GTP cyclohydrolase 1 (217 aa).

3 residues coordinate Zn(2+): cysteine 109, histidine 112, and cysteine 180.

It belongs to the GTP cyclohydrolase I family. Homomer.

The catalysed reaction is GTP + H2O = 7,8-dihydroneopterin 3'-triphosphate + formate + H(+). Its pathway is cofactor biosynthesis; 7,8-dihydroneopterin triphosphate biosynthesis; 7,8-dihydroneopterin triphosphate from GTP: step 1/1. The sequence is that of GTP cyclohydrolase 1 from Aliivibrio salmonicida (strain LFI1238) (Vibrio salmonicida (strain LFI1238)).